A 364-amino-acid chain; its full sequence is MAQQTPLYEQHTLCGARMVDFHGWMMPLHYGSQIDEHHAVRTDAGMFDVSHMTIVDLRGSRTREFLRYLLANDVAKLTKSGKALYSGMLNASGGVIDDLIVYYFTEDFFRLVVNSATREKDLSWITQHAEPFGIEITVRDDLSMIAVQGPNAQAKAATLFNDAQRQAVEGMKPFFGVQAGDLFIATTGYTGEAGYEIALPNEKAADFWRALVEAGVKPCGLGARDTLRLEAGMNLYGQEMDETISPLAANMGWTIAWEPADRDFIGREALEAQREHGTEKLVGLVMTEKGVLRNELPVRFTDAQGNQHEGIITSGTFSPTLGYSIALARVPEGIGETAIVQIRNREMPVKVTKPVFVRNGKAVA.

This sequence belongs to the GcvT family. The glycine cleavage system is composed of four proteins: P, T, L and H.

It catalyses the reaction N(6)-[(R)-S(8)-aminomethyldihydrolipoyl]-L-lysyl-[protein] + (6S)-5,6,7,8-tetrahydrofolate = N(6)-[(R)-dihydrolipoyl]-L-lysyl-[protein] + (6R)-5,10-methylene-5,6,7,8-tetrahydrofolate + NH4(+). Functionally, the glycine cleavage system catalyzes the degradation of glycine. The chain is Aminomethyltransferase from Escherichia coli (strain SMS-3-5 / SECEC).